The primary structure comprises 189 residues: Ribosome maturation factor RimM (189 aa).

Residues 95 to 169 form the PRC barrel domain; sequence DEDEFFQTDL…IIKVEPHAAG (75 aa). A disordered region spans residues 168-189; the sequence is AGLIADEHDNPPHESGKKPKKP. Residues 172-189 show a composition bias toward basic and acidic residues; sequence ADEHDNPPHESGKKPKKP.

It belongs to the RimM family. Binds ribosomal protein uS19.

Its subcellular location is the cytoplasm. Its function is as follows. An accessory protein needed during the final step in the assembly of 30S ribosomal subunit, possibly for assembly of the head region. Essential for efficient processing of 16S rRNA. May be needed both before and after RbfA during the maturation of 16S rRNA. It has affinity for free ribosomal 30S subunits but not for 70S ribosomes. This chain is Ribosome maturation factor RimM, found in Brucella abortus (strain S19).